The chain runs to 356 residues: Trans-enoyl reductase pgmF (356 aa).

Residues 57-60 (VDFK), 175-178 (SGGC), 198-201 (STPN), Y216, 261-262 (VG), and 342-343 (AK) contribute to the NADP(+) site.

The protein belongs to the zinc-containing alcohol dehydrogenase family.

Its function is as follows. FAD-linked oxidoreductase; part of the gene cluster that mediates the biosynthesis of pleosporalin A, ascomycone A, as well as a third cryptic naphthoquinone derived pigment, all responsible for the coloration of conidia. The pathway begins with the biosynthesis of the cyclized heptaketide 3-acetonyl-1,6,8-trihydroxy-2-naphthaldehyde by the NR-PKS pgmA. The C-6 hydroxyl group is further methylated by the O-methyltransferase pgmB to yield fusarubinaldehyde which is in turn oxidized by the cytochrome P450 monooxygenase pgmC at C-9. The C-1 hydroxyl group is then methylated spontaneously. Although pgmE, pgmD and pgmH are essential for the production of pleosporalin A, it is not the case for the 2 other final products and it remains difficult to assign a specific function to each enzyme. PgmF and pgmG seem not to be involved in pigment biosynthesis although they were regulated by the cluster-specific transcription factor pgmR. This Aspergillus terreus (strain NIH 2624 / FGSC A1156) protein is Trans-enoyl reductase pgmF.